We begin with the raw amino-acid sequence, 2824 residues long: MSPTAEIPKPVAVVGISAEFPSGTLSDANFDHQSFFDFLLSGKDAVERIPKDRFNIDGWQGSHLGQILPEDACFLKNVHLFDHFEFGISSKDALTMGAGTRKLVEHSFLALLDSGINCRSQNVAAFSSAVAFDLLSAADADEFEPRDGFGGGAAAVANRISYQLDLLGPSIPVDTACSSSLMALHLGVQSLRAGECEAAVIGGSQINHRFLDWIFYSQLSILSPGGKSIPFDSSADGFGRGEAVVVLVVKLLEDAIRDGDKIYATVLNTAVNSTGSAGPVKTPIAESQAAAMLTAYKGIGRSPSEADFIECHATGTSVGDPVEANWVGNHFKRDSELLIGSVKGNVGHTEITSFLTSFSKVISMFDTNRIPPQANFKEPNPAIHWEEYNMRTPTQIEGFTTRNPSGKRLASINASGLLGANGHVIAESPPPKAAKPSALPTGMPVLLMAAGLSPRSTTAIAADLSKLASEIPDELPILSNIFGRRARQLTWRAAAISTSDGPFVFPAPRFVPRGTPQLVFVFSGQGPQHIEMGRQLFKYYPVFRDSILKMDKVHVELTGKSIVKDLGFFGETRSSTALPDVWPVGLTVPSIAMIQMALVDLLAAFGIRPNLVFGHSAGEAAMSYTSGALPQELAMEIAVRRSQAMSIVEGSGGMAAVSCAPSVAREIVQEVLDEAGPDSGVLEIGCFNAPEAFTISGTHALLDKAVAIASGRGLFARKIKARVPGHCTLMEPCKERYVEQMEVAFSRYPGAHVPVVPTFSTQTGARWESEFTPEYMWNNGRVPVQFEQTVTAVVQEMPEAIFVEIGPHPALSSYISGMGAKPDKVVCPMRRVKNVTGFNEIFELLTAVGNLSTLGVNTINFHAVNATDCLEISKPIPAYPFAPKTMPFYSESSELAVKMKRSRKGPLNYDTLAVNALTHPDLAEHVIKGEPILPATGFFEMIFEEGARTIWDIELRSLLPLLPEKVLNVNVKSDGHAWSIVSSSGGRNPRLHATGFMTTEVMDKDAGPIDLAAIRARTTPADISNLYAILNNTAAFGPLYRRIEACYEGDHEILYQVRGNAPELTAHYNYVFHPSLLDSCIHGLLHPVFTGNADKSVFYLPSHIGRVTLYDRAIEEAVPETLYSYVVPHDWTPDSIACDAFIVNERGERLVTLIDCVLSKHWTGAVPTRPDTSYEYIYQPLGLPAAELVKSEAQQQDYAFLDAIVAHADEKVAPPSANGHANGHANGSANGSAVGTVGEDRKVFEEIVQSIASDELELKASSILGLFSASLDAPVAAVRQILDHAAKSGKQVVRILDIGDATASLYKQINAFASEYPSLRVDYTACGHEHATLDLRLASYNVDNVSKQAGLSPSTYDVIIETHTLGFAAELDRSLEYLHGLLLPGGFLVALEANGSAQASGGKWIDQVFSPQGRWSGLRSGKQHHRLSQSEWSGQLQKAKFQVVDGAQDAENTLFLTLLAQKHSLSTVSASSAASSAKVEEPAVFSFDHSRVLDLQKTVLASMSSGASNTKLWIESTTGTFDGAVATGFARSLMRELVAVDVRLVLFDPAWKAESRIPAIRQLSTLPSLESEIVLDASGVVMVPRLRSYAPRAPDSLDTTKYWVVDETKTVVQPAQPLPGPHQVLVKISSLSEAEGGLRGIVGTVARSGSSQWPVGAHVVTVAPSALSNFTLVHEGQLAQAPQTADEHSTAKVALLLVFAALGLRLDSRPLQSLQQIKVVVIHTGTVASSLARLLEYLGVKPVLVAPSLPLLLPRLSPGDVIIGGLSAAFARTVPRINGVSVFNWEDPEQGALAAVAQNPWLVGTTVDAHLARALPQVSVEGSSLTPDQLLPSDFSVSQSLALADDKTYLVLGGIGSLGLQIAIWMYQKGARHIVLTSRTGVSRLAGTKNRSLRGAVEYLKTLPDLELRLEPCDASSEESLSKLISSLDRPLAGAMLTAAVMADGLFLKQSADTYPIPFKPKTDAYFAFEKVVDIKKLDFLLAVSSVAGFGAAGQTNYASANTGIEYLTARYPNAWSFVAPGIADSNVGFDLFTSTNSHLEQWESSTMNSYEICLCLEDGLLRMANNERISIYVPNLNWDAISQSVSESVLYNHLVKLDAATDELEVEDPYEVLQEIVLKFVDASEEEFERNVPLTSYGLDSLSAARMSTALKPYLAITQIQLLGDLSLDDLVEKMQATKHVAVEETAVSTAEKPFAWDAMHQPGQTILKFNIGSGTPLIILHGGAGDTAAFRAIQEQFSTPLWAIQPTPEAPLDTVDTLAQFYFEKIKEARPAGPYRIAGFSASSMVTLRLAQLLEANEDEIAQLTFVDHFPLFFTSAIHGFTEDHKTFEDLTAYGRKASVALVAECCRRDTATARRLYGENLVAASNGQPSATNAMESWEWIQKTTRMNLKQVVDFGGGWEAWASSDATTRMEAARRRMVEEIAKVKAPMNVMIANWGIRALINSEWTDLGISRGGREVRTQYYDAGHFDIFEKPDFSRNLEFDWVDPHPVHQLATMIHNPAMNDLRALFKILDTKALQVMADTISQNPVVGSEISRQRLFEVCKEFVRTQKHSTWTDEEYEHSKALFPTYFETTERISKVHPSIMESPAAAVGALYSDDMIDGFYRQNKVFTSMNQEAAKTFKALVSSPDFGKQRPIRVLEVGAGVGGLTKFLVEALCDMPNADVEYTVTDLSYTLASSLAESFSYKNMVAKMYDLSKKPSEQGLQLGHYDVITGLNVIHAVPDLNATLTDLHSLLAPGGRILIVDTDGTARTSNPPRPGAIWNDFIWGSFQGWFGYTDDRTHCTIDEDEWRKRLTATGYSNVQVCHEDAGTCILFEAEKV.

The region spanning 8-428 (PKPVAVVGIS…GANGHVIAES (421 aa)) is the Ketosynthase family 3 (KS3) domain. Catalysis depends on for beta-ketoacyl synthase activity residues C177, H312, and H348. The interval 517–854 (QLVFVFSGQG…LTAVGNLSTL (338 aa)) is malonyl-CoA:ACP transacylase (MAT) domain. The active-site For malonyltransferase activity is S616. Positions 886–1004 (MPFYSESSEL…GFMTTEVMDK (119 aa)) are N-terminal hotdog fold. The PKS/mFAS DH domain occupies 886 to 1168 (MPFYSESSEL…SKHWTGAVPT (283 aa)). Residues 894 to 1083 (ELAVKMKRSR…PSLLDSCIHG (190 aa)) are dehydratase (DH) domain. H925 acts as the Proton acceptor; for dehydratase activity in catalysis. The segment at 1018 to 1168 (TTPADISNLY…SKHWTGAVPT (151 aa)) is C-terminal hotdog fold. D1078 (proton donor; for dehydratase activity) is an active-site residue. A methyltransferase (CMet) domain region spans residues 1101–1449 (PSHIGRVTLY…KFQVVDGAQD (349 aa)). The disordered stretch occupies residues 1213–1232 (APPSANGHANGHANGSANGS). The tract at residues 1518–1840 (TGTFDGAVAT…LPSDFSVSQS (323 aa)) is enoyl reductase (ER) domain. Residues 1842-2096 (ALADDKTYLV…SESVLYNHLV (255 aa)) form a ketoreductase (KR) domain region. A Carrier domain is found at 2109–2196 (DPYEVLQEIV…TAVSTAEKPF (88 aa)). The thioesterase (TE) domain stretch occupies residues 2200–2414 (AMHQPGQTIL…WASSDATTRM (215 aa)). The methyltransferase (CMet) domain stretch occupies residues 2608–2809 (YRQNKVFTSM…ATGYSNVQVC (202 aa)).

Its pathway is mycotoxin biosynthesis. Its function is as follows. Highly reducing polyketide synthase; part of the gene cluster that mediates the biosynthesis of strobilurin A, an antifungal polyketide that contains a key beta-methoxyacrylate toxophore that targets the complex III of the mitochondrial electron transport chain. Strobilurin biosynthesis begins with construction of benzoyl CoA by step-wise elimination of ammonia from phenylalanine by the phenylalanine ammonia-lyase str11, oxygenation by str8 and retro-Claisen reaction to form benzoic acid, which is activated to its CoA thiolester benzoyl CoA by the dedicated CoA ligase str10. Benzoyl CoA forms the starter unit for the highly reducing polyketide synthase stpks1 that produces the polyketide prestrobilutin A. The FAD-dependent oxygenase str9 then catalyzes the key oxidative rearrangement responsible for the creation of the beta-methoxyacrylate toxophore. Str9 performs epoxidation of the 2,3 olefin of prestrobilutin A, followed by Meinwald rearrangement to furnish the aldehyde intermediate. Rapid enolization of the aldehyde intermediate would give the beta-methoxyacrylate skeleton and methylations catalyzed by str2 and str3 complete the synthesis and lead to the production of strobilurin A. The short-chain dehydrogenase stl2 and the dehydrogenase str4 play a role in the shunt pathway leading to the production of bolineol. The cluster encodes no obvious halogenase gene that could be involved in production of strobilurin B, nor any obvious dimethylallyl-transferase that could be involved in the production of strobilurin G. It is possible that unknown proteins encoded in, or near, the cluster (such as str1 or stl1) may form new classes of halogenases or dimethylally-transferases, or that the responsible genes are located elsewhere on the genome. Similarly, proteins encoded by str5/str6 hydrolases appear to have no chemical role in the biosynthesis of strobilurin A. Finally, no obvious self-resistance gene is found within the cluster. The sequence is that of Highly reducing polyketide synthase stpks1 from Strobilurus tenacellus.